We begin with the raw amino-acid sequence, 363 residues long: 3-dehydroquinate synthase (363 aa).

NAD(+) contacts are provided by residues 107–111 (GVIGD), 131–132 (TT), Lys144, and Lys153. Residues Glu186, His251, and His268 each contribute to the Zn(2+) site.

The protein belongs to the sugar phosphate cyclases superfamily. Dehydroquinate synthase family. NAD(+) serves as cofactor. The cofactor is Co(2+). Zn(2+) is required as a cofactor.

It localises to the cytoplasm. It catalyses the reaction 7-phospho-2-dehydro-3-deoxy-D-arabino-heptonate = 3-dehydroquinate + phosphate. It functions in the pathway metabolic intermediate biosynthesis; chorismate biosynthesis; chorismate from D-erythrose 4-phosphate and phosphoenolpyruvate: step 2/7. Catalyzes the conversion of 3-deoxy-D-arabino-heptulosonate 7-phosphate (DAHP) to dehydroquinate (DHQ). The sequence is that of 3-dehydroquinate synthase from Nostoc sp. (strain PCC 7120 / SAG 25.82 / UTEX 2576).